Reading from the N-terminus, the 222-residue chain is Glutathione S-transferase U21 (222 aa).

Residues Ala-3–Asn-83 form the GST N-terminal domain. Glutathione is bound by residues Ser-13–Met-14, Asn-40–Lys-41, Thr-54–Ile-55, and Glu-67–Ser-68. One can recognise a GST C-terminal domain in the interval Asp-89 to Tyr-211.

Belongs to the GST superfamily. Tau family.

It localises to the cytoplasm. Its subcellular location is the cytosol. It catalyses the reaction RX + glutathione = an S-substituted glutathione + a halide anion + H(+). May be involved in the conjugation of reduced glutathione to a wide number of exogenous and endogenous hydrophobic electrophiles and have a detoxification role against certain herbicides. This Arabidopsis thaliana (Mouse-ear cress) protein is Glutathione S-transferase U21 (GSTU21).